The chain runs to 329 residues: Glycerol-3-phosphate dehydrogenase [NAD(P)+] (329 aa).

NADPH-binding residues include Trp15, His35, and Lys107. Sn-glycerol 3-phosphate is bound by residues Lys107, Gly135, and Ser137. An NADPH-binding site is contributed by Ala139. Sn-glycerol 3-phosphate-binding residues include Lys190, Asp243, Ser253, Arg254, and Asn255. Lys190 functions as the Proton acceptor in the catalytic mechanism. Position 254 (Arg254) interacts with NADPH. The NADPH site is built by Leu276 and Glu278.

It belongs to the NAD-dependent glycerol-3-phosphate dehydrogenase family.

The protein resides in the cytoplasm. It carries out the reaction sn-glycerol 3-phosphate + NAD(+) = dihydroxyacetone phosphate + NADH + H(+). The catalysed reaction is sn-glycerol 3-phosphate + NADP(+) = dihydroxyacetone phosphate + NADPH + H(+). It functions in the pathway membrane lipid metabolism; glycerophospholipid metabolism. In terms of biological role, catalyzes the reduction of the glycolytic intermediate dihydroxyacetone phosphate (DHAP) to sn-glycerol 3-phosphate (G3P), the key precursor for phospholipid synthesis. The sequence is that of Glycerol-3-phosphate dehydrogenase [NAD(P)+] from Rhodopseudomonas palustris (strain HaA2).